A 332-amino-acid chain; its full sequence is L-lactate dehydrogenase A chain (332 aa).

NAD(+)-binding positions include 29-57 (GAVG…IEDK) and arginine 99. Substrate-binding residues include arginine 106, asparagine 138, and arginine 169. Asparagine 138 serves as a coordination point for NAD(+). The Proton acceptor role is filled by histidine 193. Residue threonine 248 participates in substrate binding.

The protein belongs to the LDH/MDH superfamily. LDH family. Homotetramer.

It is found in the cytoplasm. It carries out the reaction (S)-lactate + NAD(+) = pyruvate + NADH + H(+). It participates in fermentation; pyruvate fermentation to lactate; (S)-lactate from pyruvate: step 1/1. Its function is as follows. Interconverts simultaneously and stereospecifically pyruvate and lactate with concomitant interconversion of NADH and NAD(+). This is L-lactate dehydrogenase A chain (LDHA) from Trachemys scripta elegans (Red-eared slider turtle).